Consider the following 331-residue polypeptide: Laforin (331 aa).

One can recognise a CBM20 domain in the interval 1–124 (MLFRFGVVVP…NNLVDGVYCL (124 aa)). S25 bears the Phosphoserine; by AMPK mark. Substrate contacts are provided by residues W32, K87, 103 to 107 (GPHHD), D197, D235, and R241. In terms of domain architecture, Tyrosine-protein phosphatase spans 156-323 (HYSRILPNIW…QQDFFQKFGK (168 aa)). The active-site Phosphocysteine intermediate is C266. The Glucan phosphatase signature motif CXAGXGR motif lies at 266–272 (CNAGVGR). Substrate is bound by residues 267-272 (NAGVGR) and Y304.

Belongs to the protein-tyrosine phosphatase family. As to quaternary structure, homodimer. Interacts with itself. Interacts with PPP1R3B, PPP1R3C, PPP1R3D, HIRIP5, and EPM2AIP1. Binds glycogen and Lafora bodies. Interacts with NHLRC1/malin (via the NHL repeats). Forms a complex with NHLRC1/malin and HSP70. Interacts with PPP1R3D; in the presence of NHLC1/malin the interaction leads to ubiquitination and autophagic degradation of PPP1R3D. Interacts (via the phosphatase domain) with MAPT/Tau; the interaction dephosphorylates MAPT. Interacts with PRDM8. Polyubiquitinated by NHLRC1/malin. Post-translationally, phosphorylation on Ser-25 by AMPK affects the phosphatase activity of the enzyme and its ability to homodimerize and interact with NHLRC1, PPP1R3C or PRKAA2. Widely expressed.

It is found in the cytoplasm. Its subcellular location is the endoplasmic reticulum membrane. It localises to the cell membrane. The catalysed reaction is O-phospho-L-tyrosyl-[protein] + H2O = L-tyrosyl-[protein] + phosphate. The enzyme catalyses O-phospho-L-seryl-[protein] + H2O = L-seryl-[protein] + phosphate. It catalyses the reaction O-phospho-L-threonyl-[protein] + H2O = L-threonyl-[protein] + phosphate. Plays an important role in preventing glycogen hyperphosphorylation and the formation of insoluble aggregates, via its activity as glycogen phosphatase, and by promoting the ubiquitination of proteins involved in glycogen metabolism via its interaction with the E3 ubiquitin ligase NHLRC1/malin. Dephosphorylates phosphotyrosine and synthetic substrates, such as para-nitrophenylphosphate (pNPP), and has low activity with phosphoserine and phosphothreonine substrates (in vitro). Has also been shown to dephosphorylate MAPT. Shows strong phosphatase activity towards complex carbohydrates in vitro, avoiding glycogen hyperphosphorylation which is associated with reduced branching and formation of insoluble aggregates. Forms a complex with NHLRC1/malin and HSP70, which suppresses the cellular toxicity of misfolded proteins by promoting their degradation through the ubiquitin-proteasome system (UPS). Acts as a scaffold protein to facilitate PPP1R3C/PTG ubiquitination by NHLRC1/malin. Also promotes proteasome-independent protein degradation through the macroautophagy pathway. This chain is Laforin (Epm2a), found in Rattus norvegicus (Rat).